Here is a 162-residue protein sequence, read N- to C-terminus: NADH-quinone oxidoreductase subunit I 2 (162 aa).

4Fe-4S ferredoxin-type domains follow at residues 53 to 83 (LRRY…IDSE) and 93 to 122 (TRYD…ETRI). [4Fe-4S] cluster is bound by residues cysteine 63, cysteine 66, cysteine 69, cysteine 73, cysteine 102, cysteine 105, cysteine 108, and cysteine 112.

Belongs to the complex I 23 kDa subunit family. NDH-1 is composed of 14 different subunits. Subunits NuoA, H, J, K, L, M, N constitute the membrane sector of the complex. It depends on [4Fe-4S] cluster as a cofactor.

It is found in the cell inner membrane. It catalyses the reaction a quinone + NADH + 5 H(+)(in) = a quinol + NAD(+) + 4 H(+)(out). In terms of biological role, NDH-1 shuttles electrons from NADH, via FMN and iron-sulfur (Fe-S) centers, to quinones in the respiratory chain. The immediate electron acceptor for the enzyme in this species is believed to be ubiquinone. Couples the redox reaction to proton translocation (for every two electrons transferred, four hydrogen ions are translocated across the cytoplasmic membrane), and thus conserves the redox energy in a proton gradient. The polypeptide is NADH-quinone oxidoreductase subunit I 2 (Nitrosococcus oceani (strain ATCC 19707 / BCRC 17464 / JCM 30415 / NCIMB 11848 / C-107)).